The chain runs to 125 residues: Small ribosomal subunit protein uS13 (125 aa).

The disordered stretch occupies residues 90-125; it reads QRHRKGLPVRGQRTKTNARTRKGPKRTVAGKKKATK.

It belongs to the universal ribosomal protein uS13 family. Part of the 30S ribosomal subunit. Forms a loose heterodimer with protein S19. Forms two bridges to the 50S subunit in the 70S ribosome.

Its function is as follows. Located at the top of the head of the 30S subunit, it contacts several helices of the 16S rRNA. In the 70S ribosome it contacts the 23S rRNA (bridge B1a) and protein L5 of the 50S subunit (bridge B1b), connecting the 2 subunits; these bridges are implicated in subunit movement. Contacts the tRNAs in the A and P-sites. The polypeptide is Small ribosomal subunit protein uS13 (Bifidobacterium adolescentis (strain ATCC 15703 / DSM 20083 / NCTC 11814 / E194a)).